The primary structure comprises 137 residues: MQNLLKNLAASLGRKPFVADKQGVYRLTIDKHLVMLAPHGSELVLRTPIDAPMLREGNNVNVTLLRSLMQQALAWAKRYPQTLVLDDCGQLVLEARLRLQELDTHGLQEVINKQLALLEHLIPQLTPFSVASRVGWN.

In terms of assembly, interacts with SycN to form a complex which specifically binds to YopN.

The protein resides in the cytoplasm. The protein localises to the cell inner membrane. Functions as a specific chaperone for YopN. It could facilitate the secretion and the subsequent translocation of YopN. The polypeptide is Chaperone protein YscB (yscB) (Yersinia pestis).